Here is a 351-residue protein sequence, read N- to C-terminus: 3-hydroxy-4-methyl-anthranilyl-[aryl-carrier protein] 5-monooxygenase (351 aa).

It belongs to the aromatic-ring hydroxylase family. It depends on FAD as a cofactor.

It catalyses the reaction 3-hydroxy-4-methylanthranilyl-[aryl-carrier protein] + NADH + O2 + H(+) = 3,5-dihydroxy-4-methylanthranilyl-[aryl-carrier protein] + NAD(+) + H2O. Its pathway is antibiotic biosynthesis. In terms of biological role, involved in the biosynthesis of the antitumor antibiotic sibiromycin. Hydroxylates the C5 position of the peptidyl carrier protein (PCP)-bound 4-methyl-3-hydroxyanthranilic acid (4-MHA or 3H4MAA), leading to the formation of the fully substituted anthranilate moiety found in sibiromycin. The sequence is that of 3-hydroxy-4-methyl-anthranilyl-[aryl-carrier protein] 5-monooxygenase from Streptosporangium sibiricum.